The following is a 104-amino-acid chain: MEKYAFRMRLNPGMAEEYRARHDAIWPELVTLLKEAGISDYSIHLDEETGLLFGVLWRTENHTMADLPSHPVMQKWWAYMADIMETRADNEPVAVPLKTVFHLS.

A substrate-binding site is contributed by Tyr-18. Residue His-22 is the Proton donor of the active site. Residues Tyr-41 and 76–77 (WW) each bind substrate.

Belongs to the rhamnose mutarotase family. As to quaternary structure, homodimer.

The protein resides in the cytoplasm. It carries out the reaction alpha-L-rhamnose = beta-L-rhamnose. It functions in the pathway carbohydrate metabolism; L-rhamnose metabolism. Involved in the anomeric conversion of L-rhamnose. This is L-rhamnose mutarotase from Sinorhizobium fredii (strain NBRC 101917 / NGR234).